The sequence spans 199 residues: dITP/XTP pyrophosphatase (199 aa).

Ser8–Lys13 serves as a coordination point for substrate. Asp69 (proton acceptor) is an active-site residue. Asp69 serves as a coordination point for Mg(2+). Substrate-binding positions include Ser70, Phe154–Asn157, Lys177, and His182–Arg183.

This sequence belongs to the HAM1 NTPase family. In terms of assembly, homodimer. It depends on Mg(2+) as a cofactor.

It catalyses the reaction XTP + H2O = XMP + diphosphate + H(+). It carries out the reaction dITP + H2O = dIMP + diphosphate + H(+). The enzyme catalyses ITP + H2O = IMP + diphosphate + H(+). Pyrophosphatase that catalyzes the hydrolysis of nucleoside triphosphates to their monophosphate derivatives, with a high preference for the non-canonical purine nucleotides XTP (xanthosine triphosphate), dITP (deoxyinosine triphosphate) and ITP. Seems to function as a house-cleaning enzyme that removes non-canonical purine nucleotides from the nucleotide pool, thus preventing their incorporation into DNA/RNA and avoiding chromosomal lesions. This is dITP/XTP pyrophosphatase from Xylella fastidiosa (strain Temecula1 / ATCC 700964).